A 282-amino-acid polypeptide reads, in one-letter code: tRNA pseudouridine synthase B (282 aa).

Residue Asp-39 is the Nucleophile of the active site.

The protein belongs to the pseudouridine synthase TruB family. Type 1 subfamily.

The enzyme catalyses uridine(55) in tRNA = pseudouridine(55) in tRNA. In terms of biological role, responsible for synthesis of pseudouridine from uracil-55 in the psi GC loop of transfer RNAs. The sequence is that of tRNA pseudouridine synthase B from Borrelia garinii subsp. bavariensis (strain ATCC BAA-2496 / DSM 23469 / PBi) (Borreliella bavariensis).